The following is a 170-amino-acid chain: Negative modulator of initiation of replication (170 aa).

The tract at residues 139–145 is interaction with DNA; sequence NTNTGRK.

It belongs to the SeqA family. Homodimer. Polymerizes to form helical filaments.

It is found in the cytoplasm. Negative regulator of replication initiation, which contributes to regulation of DNA replication and ensures that replication initiation occurs exactly once per chromosome per cell cycle. Binds to pairs of hemimethylated GATC sequences in the oriC region, thus preventing assembly of replication proteins and re-initiation at newly replicated origins. Repression is relieved when the region becomes fully methylated. This Tolumonas auensis (strain DSM 9187 / NBRC 110442 / TA 4) protein is Negative modulator of initiation of replication.